The primary structure comprises 248 residues: Ubiquinone/menaquinone biosynthesis C-methyltransferase UbiE (248 aa).

Serine 68 and aspartate 92 together coordinate S-adenosyl-L-methionine.

It belongs to the class I-like SAM-binding methyltransferase superfamily. MenG/UbiE family.

It catalyses the reaction a 2-demethylmenaquinol + S-adenosyl-L-methionine = a menaquinol + S-adenosyl-L-homocysteine + H(+). The enzyme catalyses a 2-methoxy-6-(all-trans-polyprenyl)benzene-1,4-diol + S-adenosyl-L-methionine = a 5-methoxy-2-methyl-3-(all-trans-polyprenyl)benzene-1,4-diol + S-adenosyl-L-homocysteine + H(+). The protein operates within quinol/quinone metabolism; menaquinone biosynthesis; menaquinol from 1,4-dihydroxy-2-naphthoate: step 2/2. Its pathway is cofactor biosynthesis; ubiquinone biosynthesis. Its function is as follows. Methyltransferase required for the conversion of demethylmenaquinol (DMKH2) to menaquinol (MKH2) and the conversion of 2-polyprenyl-6-methoxy-1,4-benzoquinol (DDMQH2) to 2-polyprenyl-3-methyl-6-methoxy-1,4-benzoquinol (DMQH2). This Rickettsia felis (strain ATCC VR-1525 / URRWXCal2) (Rickettsia azadi) protein is Ubiquinone/menaquinone biosynthesis C-methyltransferase UbiE.